A 255-amino-acid chain; its full sequence is tRNA pseudouridine synthase A (255 aa).

The active-site Nucleophile is Asp-56. Tyr-114 is a substrate binding site.

The protein belongs to the tRNA pseudouridine synthase TruA family. As to quaternary structure, homodimer.

The enzyme catalyses uridine(38/39/40) in tRNA = pseudouridine(38/39/40) in tRNA. Formation of pseudouridine at positions 38, 39 and 40 in the anticodon stem and loop of transfer RNAs. The protein is tRNA pseudouridine synthase A of Methylacidiphilum infernorum (isolate V4) (Methylokorus infernorum (strain V4)).